Here is a 123-residue protein sequence, read N- to C-terminus: Large ribosomal subunit protein bL12 (123 aa).

It belongs to the bacterial ribosomal protein bL12 family. As to quaternary structure, homodimer. Part of the ribosomal stalk of the 50S ribosomal subunit. Forms a multimeric L10(L12)X complex, where L10 forms an elongated spine to which 2 to 4 L12 dimers bind in a sequential fashion. Binds GTP-bound translation factors.

Its function is as follows. Forms part of the ribosomal stalk which helps the ribosome interact with GTP-bound translation factors. Is thus essential for accurate translation. This is Large ribosomal subunit protein bL12 from Zymomonas mobilis subsp. mobilis (strain ATCC 31821 / ZM4 / CP4).